The sequence spans 346 residues: MGKPLIALGLEGSANKLGVGIILHDTNGSAKILANVRHTYITPPGQGFLPSDTAKHHRAWIIPLIKQAFAEAKISFKDIDCICFTKGPGIGAPLNSVALCARMLSLIHKKPLVAVNHCIGHIEMGREITGAQNPVVLYVSGGNTQVIAYSEKKYRIFGETLDIAIGNCLDRFARIIGLSNAPSPGYNIMQEAKKGKRFIELPYTVKGMDCSFSGLLSGVEAAATELLDPKNPSSVTKQDLCYSLQETGFAMLVEITERAMAHIRADSVLIVGGVGCNERLQQMMAEMSSDRGADVFSTDERFCIDNGIMIAQAGLLAYKTGDRCAVAESTITQRYRTDDVYISWRD.

A divalent metal cation contacts are provided by His117, His121, and Tyr138. Residues 138–142, Asp170, Gly185, and Asn277 each bind substrate; that span reads YVSGG. Asp305 provides a ligand contact to a divalent metal cation.

It belongs to the KAE1 / TsaD family. As to quaternary structure, component of the EKC/KEOPS complex composed of at least SPAP27G11.07c/BUD32, cgi121, gon7, pgp2 and SPAC4H3.13/PCC1; the whole complex dimerizes. A divalent metal cation is required as a cofactor.

The protein localises to the cytoplasm. The protein resides in the nucleus. The enzyme catalyses L-threonylcarbamoyladenylate + adenosine(37) in tRNA = N(6)-L-threonylcarbamoyladenosine(37) in tRNA + AMP + H(+). Functionally, component of the EKC/KEOPS complex that is required for the formation of a threonylcarbamoyl group on adenosine at position 37 (t(6)A37) in tRNAs that read codons beginning with adenine. The complex is probably involved in the transfer of the threonylcarbamoyl moiety of threonylcarbamoyl-AMP (TC-AMP) to the N6 group of A37. Pgp2 likely plays a direct catalytic role in this reaction, but requires other protein(s) of the complex to fulfill this activity. The EKC/KEOPS complex also promotes both telomere uncapping and telomere elongation. The complex is required for efficient recruitment of transcriptional coactivators. The polypeptide is tRNA N6-adenosine threonylcarbamoyltransferase (pgp2) (Schizosaccharomyces pombe (strain 972 / ATCC 24843) (Fission yeast)).